Reading from the N-terminus, the 126-residue chain is UPF0102 protein Mlg_2205 (126 aa).

This sequence belongs to the UPF0102 family.

This chain is UPF0102 protein Mlg_2205, found in Alkalilimnicola ehrlichii (strain ATCC BAA-1101 / DSM 17681 / MLHE-1).